The chain runs to 224 residues: UPF0758 protein PSPA7_6095 (224 aa).

Residues 102–224 (VLESPQAVRD…PLSLAEYGWM (123 aa)) enclose the MPN domain. Zn(2+) contacts are provided by histidine 173, histidine 175, and aspartate 186. The JAMM motif signature appears at 173 to 186 (HNHPSGDARPSLAD).

The protein belongs to the UPF0758 family.

The protein is UPF0758 protein PSPA7_6095 of Pseudomonas paraeruginosa (strain DSM 24068 / PA7) (Pseudomonas aeruginosa (strain PA7)).